We begin with the raw amino-acid sequence, 334 residues long: Cytochrome c551 peroxidase (334 aa).

The signal sequence occupies residues 1 to 26 (MIKRTLTVSLLSLSLGAMFASAGVMA). Heme c-binding residues include C65, C68, H69, C209, C212, H213, H270, and M284. Positions 315–334 (FKLPILPPSNNDTPRSQPYE) are disordered. Polar residues predominate over residues 322–334 (PSNNDTPRSQPYE).

In terms of processing, binds 2 heme c groups covalently per subunit.

It localises to the periplasm. The enzyme catalyses 2 Fe(II)-[cytochrome c] + H2O2 + 2 H(+) = 2 Fe(III)-[cytochrome c] + 2 H2O. The chain is Cytochrome c551 peroxidase (ccp) from Nitrosomonas europaea (strain ATCC 19718 / CIP 103999 / KCTC 2705 / NBRC 14298).